Reading from the N-terminus, the 413-residue chain is Glucose-1-phosphate adenylyltransferase (413 aa).

Alpha-D-glucose 1-phosphate is bound by residues G169, 184 to 185, and S201; that span reads EK.

This sequence belongs to the bacterial/plant glucose-1-phosphate adenylyltransferase family. As to quaternary structure, homotetramer.

It carries out the reaction alpha-D-glucose 1-phosphate + ATP + H(+) = ADP-alpha-D-glucose + diphosphate. The protein operates within glycan biosynthesis; glycogen biosynthesis. Involved in the biosynthesis of ADP-glucose, a building block required for the elongation reactions to produce glycogen. Catalyzes the reaction between ATP and alpha-D-glucose 1-phosphate (G1P) to produce pyrophosphate and ADP-Glc. This is Glucose-1-phosphate adenylyltransferase from Trichlorobacter lovleyi (strain ATCC BAA-1151 / DSM 17278 / SZ) (Geobacter lovleyi).